Consider the following 143-residue polypeptide: Meiotically up-regulated gene 128 protein (143 aa).

Functionally, has a role in meiosis. The chain is Meiotically up-regulated gene 128 protein (mug128) from Schizosaccharomyces pombe (strain 972 / ATCC 24843) (Fission yeast).